A 157-amino-acid polypeptide reads, in one-letter code: Protein FAM219A (157 aa).

M1 is modified (N-acetylmethionine). Residues 1–103 (MMEEIDRFQD…SRYSSSGYSS (103 aa)) are disordered. A compositionally biased stretch (basic and acidic residues) spans 17 to 33 (SDRDCDAREEKQRELAR). The segment covering 38–52 (KNGSMGSPVNQQPKK) has biased composition (polar residues). Phosphoserine occurs at positions 44 and 74. At T85 the chain carries Phosphothreonine. Phosphoserine occurs at positions 87 and 94. Residues 94 to 103 (SRYSSSGYSS) show a composition bias toward low complexity.

The protein belongs to the FAM219 family.

This chain is Protein FAM219A (Fam219a), found in Mus musculus (Mouse).